The chain runs to 236 residues: Purine nucleoside phosphorylase DeoD-type 2 (236 aa).

A purine D-ribonucleoside is bound at residue histidine 5. Phosphate-binding positions include glycine 21, arginine 25, arginine 44, and 88-91; that span reads RVGS. A purine D-ribonucleoside is bound by residues 180–182 and 204–205; these read DME and SD. Aspartate 205 serves as the catalytic Proton donor.

It belongs to the PNP/UDP phosphorylase family. Homohexamer; trimer of homodimers.

It catalyses the reaction a purine D-ribonucleoside + phosphate = a purine nucleobase + alpha-D-ribose 1-phosphate. The catalysed reaction is a purine 2'-deoxy-D-ribonucleoside + phosphate = a purine nucleobase + 2-deoxy-alpha-D-ribose 1-phosphate. In terms of biological role, catalyzes the reversible phosphorolytic breakdown of the N-glycosidic bond in the beta-(deoxy)ribonucleoside molecules, with the formation of the corresponding free purine bases and pentose-1-phosphate. In Vibrio parahaemolyticus serotype O3:K6 (strain RIMD 2210633), this protein is Purine nucleoside phosphorylase DeoD-type 2.